The chain runs to 691 residues: Lacticin-481/lactococcin-DR transport/processing ATP-binding protein lcnDR3 (691 aa).

One can recognise a Peptidase C39 domain in the interval 6–130 (QNNEQDCLLA…KKFSGYIITL (125 aa)). The active site involves C12. The ABC transmembrane type-1 domain maps to 158–434 (TFLYIFSLFI…IQDVMFEISR (277 aa)). 5 helical membrane-spanning segments follow: residues 159-179 (FLYIFSLFISQIVALWFSIIL), 189-209 (ITYSFIMMISLVLFQTLSLLM), 262-284 (GILLKIFPSLLNFFTVFIVIIYL), 289-311 (FTLTLFLVIMNLLYMIFSFSLIS), and 385-405 (ICVILMMIFGIYLNQGNLVSI). The ABC transporter domain occupies 464–689 (IILKDISYSY…LLNDSYNSFV (226 aa)). 497 to 504 (GKSGSGKS) contributes to the ATP binding site.

The protein belongs to the ABC transporter superfamily.

The protein localises to the cell membrane. In terms of biological role, probably implicated in the export process of the lantibiotic lacticin-481/lactococcin-DR. This Lactococcus lactis subsp. lactis (Streptococcus lactis) protein is Lacticin-481/lactococcin-DR transport/processing ATP-binding protein lcnDR3 (lcnDR3).